Reading from the N-terminus, the 447-residue chain is Vasoactive intestinal polypeptide receptor (447 aa).

The Extracellular segment spans residues 1 to 103 (MCDVVNEIEL…VDDDSFFRSV (103 aa)). 3 disulfides stabilise this stretch: C15-C36, C27-C69, and C50-C86. N17, N22, N64, and N91 each carry an N-linked (GlcNAc...) asparagine glycan. Residues 104–128 (KIGYTIGHSVSLISLTTAIVILCMS) form a helical membrane-spanning segment. Residues 129 to 135 (RKLHCTR) are Cytoplasmic-facing. The chain crosses the membrane as a helical span at residues 136 to 155 (NYIHMHLFVSFILKAIAVFV). The Extracellular segment spans residues 156–178 (KDAVLYDVIQESDNCSTASVGCK). N-linked (GlcNAc...) asparagine glycosylation is present at N169. Cysteines 177 and 247 form a disulfide. A helical transmembrane segment spans residues 179–202 (AVIVFFQYCIMASFFWLLVEGLYL). Residues 203 to 216 (HALLAVSFFSERKY) are Cytoplasmic-facing. The helical transmembrane segment at 217 to 238 (FWWYILIGWGGPTIFIMAWSFA) threads the bilayer. Over 239-256 (KAYFNDVGCWDIIENSDL) the chain is Extracellular. The helical transmembrane segment at 257-280 (FWWIIKTPILASILMNFILFICII) threads the bilayer. Residues 281–305 (RILRQKINCPDIGRNESNQYSRLAK) lie on the Cytoplasmic side of the membrane. A helical membrane pass occupies residues 306–325 (STLLLIPLFGINFIIFAFIP). The Extracellular portion of the chain corresponds to 326–337 (ENIKTELRLVFD). A helical membrane pass occupies residues 338-357 (LILGSFQGFVVAVLYCFLNG). Residues 358–447 (EVQAEIKRKW…KGHEDVREVS (90 aa)) are Cytoplasmic-facing.

Belongs to the G-protein coupled receptor 2 family.

The protein localises to the cell membrane. Functionally, this is a receptor for VIP. The activity of this receptor is mediated by G proteins which activate adenylyl cyclase. This chain is Vasoactive intestinal polypeptide receptor (vipr1), found in Carassius auratus (Goldfish).